We begin with the raw amino-acid sequence, 178 residues long: Caveolin-1 (178 aa).

Position 2 is an N-acetylserine (Ser2). A Phosphoserine modification is found at Ser2. The segment at 2–94 (SGGKYVDSEG…WKASFTTFTV (93 aa)) is required for homooligomerization. Residues 2–104 (SGGKYVDSEG…TKYWFYRLLS (103 aa)) are Cytoplasmic-facing. The residue at position 5 (Lys5) is an N6-acetyllysine; alternate. Lys5 participates in a covalent cross-link: Glycyl lysine isopeptide (Lys-Gly) (interchain with G-Cter in ubiquitin); alternate. Tyr6 is modified (phosphotyrosine). Ser9 carries the post-translational modification Phosphoserine. At Tyr14 the chain carries Phosphotyrosine; by ABL1. Tyr25 is modified (phosphotyrosine). Glycyl lysine isopeptide (Lys-Gly) (interchain with G-Cter in ubiquitin) cross-links involve residues Lys26 and Lys30. Ser37 carries the phosphoserine modification. Residues Lys39, Lys47, and Lys57 each participate in a glycyl lysine isopeptide (Lys-Gly) (interchain with G-Cter in ubiquitin) cross-link. The segment at 82–94 (DGIWKASFTTFTV) is interaction with CAVIN3. The segment at residues 105–125 (ALFGIPMALVWGIYFAILSFL) is an intramembrane region (helical). Topologically, residues 126 to 178 (HIWAVVPCIKSFLIEIQCISRVYSIYVHTVCDPLFEAVGKIFSNVRINLQKEI) are cytoplasmic. Residues 131–142 (VPCIKSFLIEIQ) form an interacts with SPRY1, SPRY2, SPRY3 and SPRY4 region. 3 S-palmitoyl cysteine lipidation sites follow: Cys133, Cys143, and Cys156. Residues 149–160 (SIYVHTVCDPLF) form an interacts with SPRY1, SPRY2, and SPRY4 region. Positions 167-178 (FSNVRINLQKEI) are interacts with SPRY1, SPRY2, SPRY3 and SPRY4.

It belongs to the caveolin family. Homooligomer. Interacts with GLIPR2. Interacts with NOSTRIN. Interacts with SNAP25 and STX1A. Interacts (via the N-terminus) with DPP4; the interaction is direct. Interacts with CTNNB1, CDH1 and JUP. Interacts with PACSIN2; this interaction induces membrane tubulation. Interacts with SLC7A9. Interacts with BMX and BTK. Interacts with TGFBR1. Interacts with CAVIN3 (via leucine-zipper domain) in a cholesterol-sensitive manner. Interacts with CAVIN1. Interacts with EHD2 in a cholesterol-dependent manner. Forms a ternary complex with UBXN6 and VCP; mediates CAV1 targeting to lysosomes for degradation. Interacts with ABCG1; this interaction regulates ABCG1-mediated cholesterol efflux. Interacts with NEU3; this interaction enhances NEU3 sialidase activity within caveola. Interacts (via C-terminus) with SPRY1, SPRY2 (via C-terminus), SPRY3, and SPRY4. Interacts with IGFBP5; this interaction allows trafficking of IGFBP5 from the plasma membrane to the nucleus. In terms of processing, phosphorylated at Tyr-14 by ABL1 in response to oxidative stress. Ubiquitinated. Undergo monoubiquitination and multi- and/or polyubiquitination. Monoubiquitination of N-terminal lysines promotes integration in a ternary complex with UBXN6 and VCP which promotes oligomeric CAV1 targeting to lysosomes for degradation. Ubiquitinated by ZNRF1; leading to degradation and modulation of the TLR4-mediated immune response.

The protein resides in the golgi apparatus membrane. It localises to the cell membrane. The protein localises to the membrane. Its subcellular location is the caveola. It is found in the membrane raft. Functionally, may act as a scaffolding protein within caveolar membranes. Forms a stable heterooligomeric complex with CAV2 that targets to lipid rafts and drives caveolae formation. Mediates the recruitment of CAVIN proteins (CAVIN1/2/3/4) to the caveolae. Interacts directly with G-protein alpha subunits and can functionally regulate their activity. Involved in the costimulatory signal essential for T-cell receptor (TCR)-mediated T-cell activation. Its binding to DPP4 induces T-cell proliferation and NF-kappa-B activation in a T-cell receptor/CD3-dependent manner. Recruits CTNNB1 to caveolar membranes and may regulate CTNNB1-mediated signaling through the Wnt pathway. Negatively regulates TGFB1-mediated activation of SMAD2/3 by mediating the internalization of TGFBR1 from membrane rafts leading to its subsequent degradation. Binds 20(S)-hydroxycholesterol (20(S)-OHC). The protein is Caveolin-1 (CAV1) of Papio anubis (Olive baboon).